The sequence spans 311 residues: Putative RNA-binding protein R05D3.8 (311 aa).

The 81-residue stretch at 155 to 235 folds into the RRM domain; it reads KRLFVSYFPL…RRAVLKESVK (81 aa). Residues 261–270 are compositionally biased toward polar residues; that stretch reads TPSRPVTSVH. The segment at 261–311 is disordered; the sequence is TPSRPVTSVHASSSASSNHYDPSAAAGYAPLYHQPPESDPLSQCGYGPRKW.

This Caenorhabditis elegans protein is Putative RNA-binding protein R05D3.8.